The following is a 509-amino-acid chain: Kynureninase 1 (509 aa).

Residues Leu-154, Thr-155, 183 to 186 (FPSD), Asp-270, His-273, and Tyr-295 each bind pyridoxal 5'-phosphate. Lys-296 bears the N6-(pyridoxal phosphate)lysine mark. Pyridoxal 5'-phosphate contacts are provided by Trp-345 and Asn-373.

The protein belongs to the kynureninase family. In terms of assembly, homodimer. Requires pyridoxal 5'-phosphate as cofactor.

The protein resides in the cytoplasm. The enzyme catalyses L-kynurenine + H2O = anthranilate + L-alanine + H(+). The catalysed reaction is 3-hydroxy-L-kynurenine + H2O = 3-hydroxyanthranilate + L-alanine + H(+). It functions in the pathway amino-acid degradation; L-kynurenine degradation; L-alanine and anthranilate from L-kynurenine: step 1/1. The protein operates within cofactor biosynthesis; NAD(+) biosynthesis; quinolinate from L-kynurenine: step 2/3. Catalyzes the cleavage of L-kynurenine (L-Kyn) and L-3-hydroxykynurenine (L-3OHKyn) into anthranilic acid (AA) and 3-hydroxyanthranilic acid (3-OHAA), respectively. The sequence is that of Kynureninase 1 from Chaetomium globosum (strain ATCC 6205 / CBS 148.51 / DSM 1962 / NBRC 6347 / NRRL 1970) (Soil fungus).